The sequence spans 391 residues: Succinate--CoA ligase [ADP-forming] subunit beta (391 aa).

One can recognise an ATP-grasp domain in the interval 9–246 (KHLFTEAGIA…LTQEDETEVR (238 aa)). ATP is bound by residues Lys46, 53 to 55 (GRG), Glu99, Leu102, and Glu107. 2 residues coordinate Mg(2+): Asn199 and Asp213. Residues Asn266 and 323-325 (GIV) contribute to the substrate site.

This sequence belongs to the succinate/malate CoA ligase beta subunit family. Heterotetramer of two alpha and two beta subunits. Requires Mg(2+) as cofactor.

The enzyme catalyses succinate + ATP + CoA = succinyl-CoA + ADP + phosphate. It carries out the reaction GTP + succinate + CoA = succinyl-CoA + GDP + phosphate. It functions in the pathway carbohydrate metabolism; tricarboxylic acid cycle; succinate from succinyl-CoA (ligase route): step 1/1. Its function is as follows. Succinyl-CoA synthetase functions in the citric acid cycle (TCA), coupling the hydrolysis of succinyl-CoA to the synthesis of either ATP or GTP and thus represents the only step of substrate-level phosphorylation in the TCA. The beta subunit provides nucleotide specificity of the enzyme and binds the substrate succinate, while the binding sites for coenzyme A and phosphate are found in the alpha subunit. The protein is Succinate--CoA ligase [ADP-forming] subunit beta of Halorhodospira halophila (strain DSM 244 / SL1) (Ectothiorhodospira halophila (strain DSM 244 / SL1)).